We begin with the raw amino-acid sequence, 506 residues long: U3 small nucleolar RNA-associated protein 18 homolog (506 aa).

The span at 1–11 (MSSDESSDGLE) shows a compositional bias: acidic residues. Disordered regions lie at residues 1–44 (MSSD…SQAK) and 69–126 (AKSV…PLNH). The segment covering 24–37 (EQEKPAKIKRERYI) has biased composition (basic and acidic residues). A phosphoserine mark is found at Ser-102, Ser-104, Ser-164, and Ser-165. 4 WD repeats span residues 203–242 (YAEG…NERL), 331–370 (KQEG…IEHI), 372–413 (MDDG…ASKA), and 469–505 (EKVG…YFKG).

This sequence belongs to the WD repeat UTP18 family. As to quaternary structure, component of U3 snoRNP complex.

Its subcellular location is the nucleus. It localises to the nucleolus. Functionally, component of a nucleolar small nuclear ribonucleoprotein particle (snoRNP) thought to participate in the processing and modification of pre-ribosomal RNA. Regulation of cell size by ribosome synthesis is an important parameter for stem cell maintenance and function. The polypeptide is U3 small nucleolar RNA-associated protein 18 homolog (wcd) (Drosophila melanogaster (Fruit fly)).